The primary structure comprises 230 residues: Modulator of macroautophagy TMEM150B (230 aa).

A topological domain (cytoplasmic) is located at residue Met-1. Residues Trp-2–Val-22 form a helical membrane-spanning segment. Topologically, residues Tyr-23–Gln-50 are extracellular. 2 N-linked (GlcNAc...) asparagine glycosylation sites follow: Asn-29 and Asn-33. A helical transmembrane segment spans residues Ser-51–Ile-71. Residues Arg-72 to Ser-83 lie on the Cytoplasmic side of the membrane. The helical transmembrane segment at Val-84–Gly-104 threads the bilayer. Residues Asn-105–His-115 are Extracellular-facing. The chain crosses the membrane as a helical span at residues Leu-116–Leu-136. At Thr-137–Gly-150 the chain is on the cytoplasmic side. Residues Pro-151–Leu-171 form a helical membrane-spanning segment. Topologically, residues Lys-172–Glu-183 are extracellular. A helical transmembrane segment spans residues Trp-184–Leu-204. Topologically, residues Asp-205–Ile-230 are cytoplasmic.

This sequence belongs to the DRAM/TMEM150 family.

The protein resides in the cell membrane. It localises to the endosome membrane. The protein localises to the cytoplasmic vesicle. It is found in the autophagosome membrane. Functionally, modulator of macroautophagy that causes accumulation of autophagosomes under basal conditions and enhances autophagic flux. Represses cell death and promotes long-term clonogenic survival of cells grown in the absence of glucose in a macroautophagy-independent manner. May have some role in extracellular matrix engulfment or growth factor receptor recycling, both of which can modulate cell survival. The polypeptide is Modulator of macroautophagy TMEM150B (Xenopus tropicalis (Western clawed frog)).